Consider the following 367-residue polypeptide: Gibberellin 20 oxidase 3 (367 aa).

The 107-residue stretch at 198–304 (DGDPVMRLNH…RRSLTFFLNP (107 aa)) folds into the Fe2OG dioxygenase domain. Tyr-208 lines the 2-oxoglutarate pocket. Fe cation is bound by residues His-223, Asp-225, and His-285. Arg-295 and Ser-297 together coordinate 2-oxoglutarate.

It belongs to the iron/ascorbate-dependent oxidoreductase family. It depends on Fe(2+) as a cofactor. L-ascorbate is required as a cofactor.

The enzyme catalyses gibberellin A12 + 2 2-oxoglutarate + 3 O2 + H(+) = gibberellin A9 + 2 succinate + 3 CO2 + 2 H2O. It catalyses the reaction gibberellin A53 + 2 2-oxoglutarate + 3 O2 + H(+) = gibberellin A20 + 2 succinate + 3 CO2 + 2 H2O. Its function is as follows. Key oxidase enzyme in the biosynthesis of gibberellin. Catalyzes the formation of bioactive gibberellins (GAs) via a three-step oxidation at C-20 of the GA skeleton. Controls the elongation of the vegetative shoot and plant height by the regulation of active gibberellin levels. This chain is Gibberellin 20 oxidase 3, found in Oryza sativa subsp. japonica (Rice).